Consider the following 336-residue polypeptide: Immune-associated nucleotide-binding protein 13 (336 aa).

The 207-residue stretch at 15-221 (KPERTLVLLG…YMADLSHELR (207 aa)) folds into the AIG1-type G domain. The tract at residues 24–31 (GRTGNGKS) is G1. GTP contacts are provided by residues 24–32 (GRTGNGKSA) and Ser-45. The tract at residues 51–55 (FITKE) is G2. A G3 region spans residues 73-76 (DTPG). Residues 143–146 (TNED) are G4. The interval 179-181 (DNS) is G5. Asn-180 contacts GTP. Positions 265–328 (KEKISNQLKE…EKETASLRTE (64 aa)) form a coiled coil.

This sequence belongs to the TRAFAC class TrmE-Era-EngA-EngB-Septin-like GTPase superfamily. AIG1/Toc34/Toc159-like paraseptin GTPase family. IAN subfamily. As to expression, expressed in pollen grains.

The sequence is that of Immune-associated nucleotide-binding protein 13 from Arabidopsis thaliana (Mouse-ear cress).